Reading from the N-terminus, the 512-residue chain is Ferrochelatase-2, chloroplastic (512 aa).

Residues 1–32 (MNCPAMTASPSSSSSSSYSTFRPPPPLLPQLS) are disordered. A chloroplast-targeting transit peptide spans 1–83 (MNCPAMTASP…SNPLNISSSS (83 aa)). The span at 9-21 (SPSSSSSSSYSTF) shows a compositional bias: low complexity. Val-84 is modified (N-acetylvaline).

It belongs to the ferrochelatase family. Expressed in leaves and flowers.

The protein resides in the plastid. It is found in the chloroplast membrane. It localises to the chloroplast thylakoid membrane. The catalysed reaction is heme b + 2 H(+) = protoporphyrin IX + Fe(2+). It participates in porphyrin-containing compound metabolism; protoheme biosynthesis; protoheme from protoporphyrin-IX: step 1/1. Catalyzes the last step of heme biosynthesis by inserting ferrous iron into protoporphyrin IX to produce protoheme. Produces heme for photosynthetic cytochromes, and for proteins involved in abiotic and biotic stress responses. May play a role in the quality control of individual chloroplasts during photo-oxidative stress through regulation of heme biosynthesis. The sequence is that of Ferrochelatase-2, chloroplastic from Arabidopsis thaliana (Mouse-ear cress).